The sequence spans 424 residues: Histidine--tRNA ligase (424 aa).

The protein belongs to the class-II aminoacyl-tRNA synthetase family. As to quaternary structure, homodimer.

The protein localises to the cytoplasm. The enzyme catalyses tRNA(His) + L-histidine + ATP = L-histidyl-tRNA(His) + AMP + diphosphate + H(+). The polypeptide is Histidine--tRNA ligase (hisS) (Bacillus subtilis (strain 168)).